Consider the following 88-residue polypeptide: Small ribosomal subunit protein bS20 (88 aa).

Positions 1-23 are disordered; that stretch reads MANSPQAKKRARQNDKARAHNAS.

This sequence belongs to the bacterial ribosomal protein bS20 family.

Its function is as follows. Binds directly to 16S ribosomal RNA. In Saccharophagus degradans (strain 2-40 / ATCC 43961 / DSM 17024), this protein is Small ribosomal subunit protein bS20.